Reading from the N-terminus, the 110-residue chain is uncharacterized protein (110 aa).

This is an uncharacterized protein from Mycobacterium tuberculosis (strain CDC 1551 / Oshkosh).